A 175-amino-acid polypeptide reads, in one-letter code: Methylmalonyl-CoA epimerase, mitochondrial (175 aa).

A mitochondrion-targeting transit peptide spans 1–35; sequence MARVLKVAAASAAGLFPRLRTPVSTVRTSASLSSH. The VOC domain maps to 46–175; that stretch reads RLNHVAVAVP…GGVLVELEQA (130 aa). A Co(2+)-binding site is contributed by His49. Lys113 carries the post-translational modification N6-succinyllysine. His121 is a Co(2+) binding site. Lys149 is subject to N6-acetyllysine; alternate. Residue Lys149 is modified to N6-succinyllysine; alternate. Glu171 is a Co(2+) binding site.

It belongs to the methylmalonyl-CoA epimerase family.

Its subcellular location is the mitochondrion. The catalysed reaction is (R)-methylmalonyl-CoA = (S)-methylmalonyl-CoA. Functionally, methylmalonyl-CoA epimerase involved in propionyl-CoA metabolism. This is Methylmalonyl-CoA epimerase, mitochondrial (MCEE) from Bos taurus (Bovine).